Reading from the N-terminus, the 137-residue chain is Large ribosomal subunit protein uL16 (137 aa).

It belongs to the universal ribosomal protein uL16 family. In terms of assembly, part of the 50S ribosomal subunit.

In terms of biological role, binds 23S rRNA and is also seen to make contacts with the A and possibly P site tRNAs. This Rhodopseudomonas palustris (strain ATCC BAA-98 / CGA009) protein is Large ribosomal subunit protein uL16.